Reading from the N-terminus, the 598-residue chain is MFS siderochrome iron transporter D (598 aa).

The tract at residues 1–34 is disordered; sequence MLSSWQKKFFQTPEHPPAEGIAPPRDDGVPNPEP. Topologically, residues 1–76 are cytoplasmic; sequence MLSSWQKKFF…AEAITLTWSK (76 aa). Residues 77 to 97 traverse the membrane as a helical segment; that stretch reads ISLGAAYFLMWLLYLVNGFQA. The Extracellular portion of the chain corresponds to 98 to 115; it reads SITGNLSAYVTSGFESHS. Asn102 is a glycosylation site (N-linked (GlcNAc...) asparagine). Residues 116–136 form a helical membrane-spanning segment; sequence LIPVISIVSSVMSAATYMPLA. Residues 137–144 lie on the Cytoplasmic side of the membrane; it reads KVLNLWDR. A helical transmembrane segment spans residues 145 to 165; the sequence is SIGFIIMVAFATLGLILSATC. Residues 166 to 171 are Extracellular-facing; sequence HDIGTY. Residues 172 to 192 form a helical membrane-spanning segment; it reads CAAQVFYSIGFAGIIFSVDVI. Over 193 to 203 the chain is Cytoplasmic; sequence TADTSTLRDRG. The chain crosses the membrane as a helical span at residues 204–224; it reads LAYAFTSSPYIITAFGGPAAA. Over 225-233 the chain is Extracellular; sequence EHFYDSNWR. A helical transmembrane segment spans residues 234-254; that stretch reads WAYGCFSIVLPVVALPMFCLL. Over 255-289 the chain is Cytoplasmic; sequence RWNRHKAKKSGLLKDKADSGRTWMESIRHYIIEFD. A helical membrane pass occupies residues 290–310; it reads ILGVFFLAAGLVLFLLPFSIA. The Extracellular segment spans residues 311-318; the sequence is GSTEDDWK. A helical membrane pass occupies residues 319-339; it reads SASIITMLVIGFVCLLVFALV. The Cytoplasmic portion of the chain corresponds to 340–341; it reads ER. A helical membrane pass occupies residues 342–362; it reads FVAPVPFLPWALLASRTVLGA. Over 363 to 396 the chain is Extracellular; sequence CMLDVCYQIAYYCWFNYYTSYLQVVYGTSITTAG. A helical membrane pass occupies residues 397–417; it reads YITSIFDVVSGVWLFIVGFLI. Topologically, residues 418-424 are cytoplasmic; it reads KKTNRFR. Residues 425 to 445 traverse the membrane as a helical segment; it reads WLLFIAVPLYILGVGLMIYFR. Topologically, residues 446–450 are extracellular; that stretch reads KPSWS. The chain crosses the membrane as a helical span at residues 451-471; sequence VGYMIMCQIFIAFAGGTMIIC. Residues 472 to 490 are Cytoplasmic-facing; sequence QQVAVLAASDHDHAASSLA. The helical transmembrane segment at 491-511 threads the bilayer; that stretch reads FLNVFGTMGSAVGSSISGAIW. Residues 512 to 562 are Extracellular-facing; the sequence is THTLPGALQRLLPDSVKADWQTIYDSLEEQLSYERGTLIRQAIALAYASTQ. A helical transmembrane segment spans residues 563-583; it reads SKMLIAGTAIMALSLVWMFVI. Over 584-598 the chain is Cytoplasmic; it reads RDIKLTKTQTKGVLF.

It belongs to the major facilitator superfamily.

The protein resides in the cell membrane. Major facilitator transporter involved in fusarinine C (FsC) uptake. In contrast to TAFC-mediated iron uptake, FsC-mediated iron uptake via mirD does not play a significant role during infection. The protein is MFS siderochrome iron transporter D of Aspergillus fumigatus (strain ATCC MYA-4609 / CBS 101355 / FGSC A1100 / Af293) (Neosartorya fumigata).